The primary structure comprises 215 residues: Cytochrome b6 (215 aa).

Residues 32-52 (IFYCLGGITLTCFLVQVATGF) form a helical membrane-spanning segment. Cys-35 is a heme c binding site. Heme b-binding residues include His-86 and His-100. The next 3 helical transmembrane spans lie at 90–110 (ASMM…TGGF), 116–136 (LTWV…VTGY), and 186–206 (LHTF…FPMI). Positions 187 and 202 each coordinate heme b.

The protein belongs to the cytochrome b family. PetB subfamily. As to quaternary structure, the 4 large subunits of the cytochrome b6-f complex are cytochrome b6, subunit IV (17 kDa polypeptide, PetD), cytochrome f and the Rieske protein, while the 4 small subunits are PetG, PetL, PetM and PetN. The complex functions as a dimer. The cofactor is heme b. Heme c serves as cofactor.

It localises to the plastid. The protein localises to the chloroplast thylakoid membrane. Functionally, component of the cytochrome b6-f complex, which mediates electron transfer between photosystem II (PSII) and photosystem I (PSI), cyclic electron flow around PSI, and state transitions. This chain is Cytochrome b6, found in Liriodendron tulipifera (Tuliptree).